Reading from the N-terminus, the 538-residue chain is Chaperonin GroEL 1 (538 aa).

Residues 29–32 (TLGP), 86–90 (DGTTT), Gly413, and Asp494 contribute to the ATP site.

The protein belongs to the chaperonin (HSP60) family. As to quaternary structure, forms a cylinder of 14 subunits composed of two heptameric rings stacked back-to-back. Interacts with the co-chaperonin GroES.

The protein localises to the cytoplasm. The catalysed reaction is ATP + H2O + a folded polypeptide = ADP + phosphate + an unfolded polypeptide.. In terms of biological role, together with its co-chaperonin GroES, plays an essential role in assisting protein folding. The GroEL-GroES system forms a nano-cage that allows encapsulation of the non-native substrate proteins and provides a physical environment optimized to promote and accelerate protein folding. The polypeptide is Chaperonin GroEL 1 (Mycolicibacterium paratuberculosis (strain ATCC BAA-968 / K-10) (Mycobacterium paratuberculosis)).